The following is a 231-amino-acid chain: U1 small nuclear ribonucleoprotein C (231 aa).

The segment at 4-36 (YYCEYCHSYLTHDTLSVRKSHLVGKNHLRITAD) adopts a Matrin-type zinc-finger fold. Positions 49-61 (HNHKRRHIGKRGR) are enriched in basic residues. 3 disordered regions span residues 49–71 (HNHK…SQNE), 137–177 (PQRA…LEPP), and 205–231 (ESKK…RYGN).

It belongs to the U1 small nuclear ribonucleoprotein C family. As to quaternary structure, U1 snRNP is composed of the 7 core Sm proteins SMB1, SMD1, SMD2, SMD3, SME1, SMX3 and SMX2 (Sm proteins B, D1, D2, D3, E, F and G, respectively) that assemble in a heptameric protein ring on the Sm site of the small nuclear RNA to form the core snRNP, and at least 10 U1 snRNP-specific proteins SNP1/U1-70K, MUD1/U1-A, YHC1/U1-C, LUC7, NAM8, PRP39, PRP40, PRP42, SNU56 and SNU71. YHC1/U1-C interacts with U1 snRNA and the 5' splice-site region of the pre-mRNA.

Its subcellular location is the nucleus. Component of the spliceosomal U1 snRNP, which is essential for recognition of the pre-mRNA 5' splice-site and the subsequent assembly of the spliceosome. YHC1/U1-C is directly involved in initial 5' splice-site recognition for both constitutive and regulated alternative splicing. The interaction with the 5' splice-site seems to precede base-pairing between the pre-mRNA and the U1 snRNA. Stimulates commitment or early (E) complex formation by stabilizing the base pairing of the 5' end of the U1 snRNA and the 5' splice-site region. The chain is U1 small nuclear ribonucleoprotein C from Saccharomyces cerevisiae (strain ATCC 204508 / S288c) (Baker's yeast).